The sequence spans 247 residues: Phycocyanobilin:ferredoxin oxidoreductase (247 aa).

This sequence belongs to the HY2 family.

The enzyme catalyses (2R,3Z)-phycocyanobilin + 4 oxidized [2Fe-2S]-[ferredoxin] = biliverdin IXalpha + 4 reduced [2Fe-2S]-[ferredoxin] + 4 H(+). In terms of biological role, catalyzes the four-electron reduction of biliverdin IX-alpha (2-electron reduction at both the A and D rings); the reaction proceeds via an isolatable 2-electron intermediate, 181,182-dihydrobiliverdin. This is Phycocyanobilin:ferredoxin oxidoreductase (pcyA) from Prochlorococcus marinus (strain SARG / CCMP1375 / SS120).